The primary structure comprises 689 residues: Armadillo-like helical domain-containing protein 3 (689 aa).

Residues Ile-520–Gly-538 traverse the membrane as a helical segment.

Belongs to the ARMH3 family.

It is found in the golgi apparatus membrane. It localises to the cytoplasm. In terms of biological role, may be involved in Golgi maintenance and protein secretion. The sequence is that of Armadillo-like helical domain-containing protein 3 from Danio rerio (Zebrafish).